The sequence spans 345 residues: Photosystem II protein D1 (345 aa).

Helical transmembrane passes span 30-47 (YVGW…TAAT), 119-134 (HFFI…EWEL), and 143-157 (WIAV…AASA). His-119 serves as a coordination point for chlorophyll a. Tyr-127 is a pheophytin a binding site. The [CaMn4O5] cluster site is built by Asp-171 and Glu-190. A helical transmembrane segment spans residues 198–219 (FHMLGVAGVFGGSLFSAMHGSL). Position 199 (His-199) interacts with chlorophyll a. A quinone is bound by residues His-216 and 265 to 266 (SF). His-216 serves as a coordination point for Fe cation. A Fe cation-binding site is contributed by His-273. Residues 275 to 289 (FLAVWPVVGIWFTAL) traverse the membrane as a helical segment. Residues His-333, Glu-334, Asp-343, and Ala-345 each contribute to the [CaMn4O5] cluster site.

The protein belongs to the reaction center PufL/M/PsbA/D family. In terms of assembly, PSII is composed of 1 copy each of membrane proteins PsbA, PsbB, PsbC, PsbD, PsbE, PsbF, PsbH, PsbI, PsbJ, PsbK, PsbL, PsbM, PsbT, PsbY, PsbZ, Psb30/Ycf12, at least 3 peripheral proteins of the oxygen-evolving complex and a large number of cofactors. It forms dimeric complexes. The D1/D2 heterodimer binds P680, chlorophylls that are the primary electron donor of PSII, and subsequent electron acceptors. It shares a non-heme iron and each subunit binds pheophytin, quinone, additional chlorophylls, carotenoids and lipids. D1 provides most of the ligands for the Mn4-Ca-O5 cluster of the oxygen-evolving complex (OEC). There is also a Cl(-1) ion associated with D1 and D2, which is required for oxygen evolution. The PSII complex binds additional chlorophylls, carotenoids and specific lipids. is required as a cofactor. Tyr-162 forms a radical intermediate that is referred to as redox-active TyrZ, YZ or Y-Z.

It is found in the plastid. Its subcellular location is the chloroplast thylakoid membrane. The enzyme catalyses 2 a plastoquinone + 4 hnu + 2 H2O = 2 a plastoquinol + O2. Its function is as follows. Photosystem II (PSII) is a light-driven water:plastoquinone oxidoreductase that uses light energy to abstract electrons from H(2)O, generating O(2) and a proton gradient subsequently used for ATP formation. It consists of a core antenna complex that captures photons, and an electron transfer chain that converts photonic excitation into a charge separation. The D1/D2 (PsbA/PsbD) reaction center heterodimer binds P680, the primary electron donor of PSII as well as several subsequent electron acceptors. This chain is Photosystem II protein D1, found in Euglena gracilis.